Here is a 73-residue protein sequence, read N- to C-terminus: Large ribosomal subunit protein bL31 (73 aa).

Zn(2+)-binding residues include cysteine 16, cysteine 18, cysteine 37, and cysteine 40.

This sequence belongs to the bacterial ribosomal protein bL31 family. Type A subfamily. In terms of assembly, part of the 50S ribosomal subunit. Zn(2+) is required as a cofactor.

Functionally, binds the 23S rRNA. This is Large ribosomal subunit protein bL31 from Hamiltonella defensa subsp. Acyrthosiphon pisum (strain 5AT).